Here is a 353-residue protein sequence, read N- to C-terminus: Photosystem II D2 protein (353 aa).

Position 2 is an N-acetylthreonine (Thr2). Thr2 bears the Phosphothreonine mark. Residues 41-61 (CAYFALGGWFTGTTFVTSWYT) form a helical membrane-spanning segment. Chlorophyll a is bound at residue His118. Residues 125–141 (GFMLRQFELARSVQLRP) traverse the membrane as a helical segment. Residues Gln130 and Asn143 each contribute to the pheophytin a site. Residues 153-166 (VFVSVFLIYPLGQS) form a helical membrane-spanning segment. Position 198 (His198) interacts with chlorophyll a. The chain crosses the membrane as a helical span at residues 208–228 (AALLCAIHGATVENTLFEDGD). 2 residues coordinate a plastoquinone: His215 and Phe262. Residue His215 participates in Fe cation binding. His269 contacts Fe cation. A helical transmembrane segment spans residues 279 to 295 (GLWMSALGVVGLALNLR).

The protein belongs to the reaction center PufL/M/PsbA/D family. PSII is composed of 1 copy each of membrane proteins PsbA, PsbB, PsbC, PsbD, PsbE, PsbF, PsbH, PsbI, PsbJ, PsbK, PsbL, PsbM, PsbT, PsbX, PsbY, PsbZ, Psb30/Ycf12, at least 3 peripheral proteins of the oxygen-evolving complex and a large number of cofactors. It forms dimeric complexes. The cofactor is The D1/D2 heterodimer binds P680, chlorophylls that are the primary electron donor of PSII, and subsequent electron acceptors. It shares a non-heme iron and each subunit binds pheophytin, quinone, additional chlorophylls, carotenoids and lipids. There is also a Cl(-1) ion associated with D1 and D2, which is required for oxygen evolution. The PSII complex binds additional chlorophylls, carotenoids and specific lipids..

The protein localises to the plastid. It is found in the chloroplast thylakoid membrane. It carries out the reaction 2 a plastoquinone + 4 hnu + 2 H2O = 2 a plastoquinol + O2. Photosystem II (PSII) is a light-driven water:plastoquinone oxidoreductase that uses light energy to abstract electrons from H(2)O, generating O(2) and a proton gradient subsequently used for ATP formation. It consists of a core antenna complex that captures photons, and an electron transfer chain that converts photonic excitation into a charge separation. The D1/D2 (PsbA/PsbD) reaction center heterodimer binds P680, the primary electron donor of PSII as well as several subsequent electron acceptors. D2 is needed for assembly of a stable PSII complex. This chain is Photosystem II D2 protein, found in Morus indica (Mulberry).